Consider the following 720-residue polypeptide: Nucleolar protein 11 (720 aa).

The interval 365–392 is disordered; that stretch reads KDPETKPSNAGAQKKTRERKTNANAGNG.

It localises to the nucleus. Its subcellular location is the nucleolus. Its function is as follows. Ribosome biogenesis factor. May be required for both optimal rDNA transcription and pre-rRNA processing. The polypeptide is Nucleolar protein 11 (nol11) (Xenopus laevis (African clawed frog)).